Consider the following 230-residue polypeptide: UPF0173 metal-dependent hydrolase Dshi_2788 (230 aa).

This sequence belongs to the UPF0173 family.

The chain is UPF0173 metal-dependent hydrolase Dshi_2788 from Dinoroseobacter shibae (strain DSM 16493 / NCIMB 14021 / DFL 12).